Consider the following 227-residue polypeptide: Ribonuclease 3 (227 aa).

The RNase III domain maps to 4–126 (LDRLERKIGY…IIGAMSLDQG (123 aa)). Glu39 is a binding site for Mg(2+). Residue Asp43 is part of the active site. Residues Asp112 and Glu115 each coordinate Mg(2+). The active site involves Glu115. One can recognise a DRBM domain in the interval 153-226 (DAKTRLQEYL…AEQILKELDI (74 aa)).

The protein belongs to the ribonuclease III family. As to quaternary structure, homodimer. Mg(2+) is required as a cofactor.

It is found in the cytoplasm. The enzyme catalyses Endonucleolytic cleavage to 5'-phosphomonoester.. Functionally, digests double-stranded RNA. Involved in the processing of primary rRNA transcript to yield the immediate precursors to the large and small rRNAs (23S and 16S). Processes some mRNAs, and tRNAs when they are encoded in the rRNA operon. Processes pre-crRNA and tracrRNA of type II CRISPR loci if present in the organism. The protein is Ribonuclease 3 of Haemophilus influenzae (strain PittGG).